The primary structure comprises 166 residues: MNYTSYILAFQLCVILGSSGCYCQAPFFDEIENLKKYFNASNPDVADGGPLFLEILKNWKEESDKKIIQSQIVSFYFKLFENLKDNQIIQRSMDIIKQDMFQKFLNGSSEKLEDFKKLIQIPVDNLKVQRKAISELIKVMNDLSPKSNLRKRKRSQNLFRGRRASK.

Positions 1–23 are cleaved as a signal peptide; that stretch reads MNYTSYILAFQLCVILGSSGCYC. The residue at position 24 (glutamine 24) is a Pyrrolidone carboxylic acid. N-linked (GlcNAc...) asparagine glycans are attached at residues asparagine 39 and asparagine 106.

The protein belongs to the type II (or gamma) interferon family. Homodimer. Interacts with IFNGR1 (via extracellular domain); this interaction promotes IFNGR1 dimerization. As to expression, released primarily from activated T lymphocytes.

Its subcellular location is the secreted. Its function is as follows. Type II interferon produced by immune cells such as T-cells and NK cells that plays crucial roles in antimicrobial, antiviral, and antitumor responses by activating effector immune cells and enhancing antigen presentation. Primarily signals through the JAK-STAT pathway after interaction with its receptor IFNGR1 to affect gene regulation. Upon IFNG binding, IFNGR1 intracellular domain opens out to allow association of downstream signaling components JAK2, JAK1 and STAT1, leading to STAT1 activation, nuclear translocation and transcription of IFNG-regulated genes. Many of the induced genes are transcription factors such as IRF1 that are able to further drive regulation of a next wave of transcription. Plays a role in class I antigen presentation pathway by inducing a replacement of catalytic proteasome subunits with immunoproteasome subunits. In turn, increases the quantity, quality, and repertoire of peptides for class I MHC loading. Increases the efficiency of peptide generation also by inducing the expression of activator PA28 that associates with the proteasome and alters its proteolytic cleavage preference. Up-regulates as well MHC II complexes on the cell surface by promoting expression of several key molecules such as cathepsins B/CTSB, H/CTSH, and L/CTSL. Participates in the regulation of hematopoietic stem cells during development and under homeostatic conditions by affecting their development, quiescence, and differentiation. The chain is Interferon gamma (IFNG) from Camelus bactrianus (Bactrian camel).